The primary structure comprises 699 residues: DNA ligase (699 aa).

The disordered stretch occupies residues 1–29 (MSDADVDAESNPYLRDPPTEFEPAESLSR). NAD(+) is bound by residues 60–64 (DAAYD), 108–109 (SI), and Glu137. Catalysis depends on Lys139, which acts as the N6-AMP-lysine intermediate. NAD(+)-binding residues include Arg160, Glu196, Lys311, and Lys335. Zn(2+) is bound by residues Cys425, Cys428, Cys441, and Cys447. The 54-residue stretch at 613-666 (SGGDELDGLTFVVTGTLAASRSDVTELVESHGGNVTGSVSGNTDYLVVGENPGR) folds into the BRCT domain.

The protein belongs to the NAD-dependent DNA ligase family. LigA subfamily. Mg(2+) is required as a cofactor. Requires Mn(2+) as cofactor.

It catalyses the reaction NAD(+) + (deoxyribonucleotide)n-3'-hydroxyl + 5'-phospho-(deoxyribonucleotide)m = (deoxyribonucleotide)n+m + AMP + beta-nicotinamide D-nucleotide.. Its activity is regulated as follows. Displays maximal in vitro activity at high salt levels. Functionally, DNA ligase that catalyzes the formation of phosphodiester linkages between 5'-phosphoryl and 3'-hydroxyl groups in double-stranded DNA using NAD as a coenzyme and as the energy source for the reaction. It is essential for DNA replication and repair of damaged DNA. This chain is DNA ligase, found in Haloferax volcanii (strain ATCC 29605 / DSM 3757 / JCM 8879 / NBRC 14742 / NCIMB 2012 / VKM B-1768 / DS2) (Halobacterium volcanii).